The primary structure comprises 373 residues: Superinfection exclusion protein (373 aa).

The N-terminal stretch at 1 to 15 is a signal peptide; that stretch reads MIVLLILSLACTAFT.

The protein belongs to the serpin family. Orthopoxvirus OPG040 subfamily. Interacts with A56 protein.

The protein resides in the virion membrane. The protein localises to the host cell membrane. Prevents cell to cell fusion via its interaction with A56 protein. The A56-K2 complex associates with components of the entry fusion complex (EFC) presumably to avoid superinfection and syncytium formation. This chain is Superinfection exclusion protein (OPG040), found in Homo sapiens (Human).